The chain runs to 385 residues: ATP phosphoribosyltransferase regulatory subunit (385 aa).

It belongs to the class-II aminoacyl-tRNA synthetase family. HisZ subfamily. As to quaternary structure, heteromultimer composed of HisG and HisZ subunits.

It localises to the cytoplasm. It functions in the pathway amino-acid biosynthesis; L-histidine biosynthesis; L-histidine from 5-phospho-alpha-D-ribose 1-diphosphate: step 1/9. In terms of biological role, required for the first step of histidine biosynthesis. May allow the feedback regulation of ATP phosphoribosyltransferase activity by histidine. This chain is ATP phosphoribosyltransferase regulatory subunit, found in Lysinibacillus sphaericus (strain C3-41).